A 317-amino-acid chain; its full sequence is Pinoresinol reductase 1 (317 aa).

Residues Thr18, Tyr20, Ile21, Arg41, Lys50, Ser90, Gly91, Arg95, Asn98, Ser121, and Glu122 each contribute to the NADP(+) site. (-)-pinoresinol is bound at residue Met125. Lys144 and Phe166 together coordinate NADP(+). Lys144 serves as the catalytic Proton acceptor. Residues Met177 and Val178 each coordinate (-)-pinoresinol.

This sequence belongs to the NmrA-type oxidoreductase family. Isoflavone reductase subfamily. As to quaternary structure, forms homodimers. Expressed in roots and stems.

The catalysed reaction is (-)-lariciresinol + NADP(+) = (-)-pinoresinol + NADPH + H(+). The enzyme catalyses (+)-lariciresinol + NADP(+) = (+)-pinoresinol + NADPH + H(+). In terms of biological role, reductase involved in lignan biosynthesis. Involved in secondary cell wall biosynthesis in fiber cells. Unlike conventional pinoresinol reductases that can reduce both pinoresinol and lariciresinol, PRR1 shows a strict substrate preference toward pinoresinol. Active on both (+) and (-)-pinoresinol. Abstracts the 4R-hydride from the NADPH cofactor during catalysis. The sequence is that of Pinoresinol reductase 1 from Arabidopsis thaliana (Mouse-ear cress).